Reading from the N-terminus, the 252-residue chain is 2-succinyl-6-hydroxy-2,4-cyclohexadiene-1-carboxylate synthase (252 aa).

It belongs to the AB hydrolase superfamily. MenH family. Monomer.

It catalyses the reaction 5-enolpyruvoyl-6-hydroxy-2-succinyl-cyclohex-3-ene-1-carboxylate = (1R,6R)-6-hydroxy-2-succinyl-cyclohexa-2,4-diene-1-carboxylate + pyruvate. It functions in the pathway quinol/quinone metabolism; 1,4-dihydroxy-2-naphthoate biosynthesis; 1,4-dihydroxy-2-naphthoate from chorismate: step 3/7. The protein operates within quinol/quinone metabolism; menaquinone biosynthesis. Catalyzes a proton abstraction reaction that results in 2,5-elimination of pyruvate from 2-succinyl-5-enolpyruvyl-6-hydroxy-3-cyclohexene-1-carboxylate (SEPHCHC) and the formation of 2-succinyl-6-hydroxy-2,4-cyclohexadiene-1-carboxylate (SHCHC). The protein is 2-succinyl-6-hydroxy-2,4-cyclohexadiene-1-carboxylate synthase of Escherichia coli O157:H7.